The chain runs to 92 residues: RNA-binding protein Hfq (92 aa).

Residues 9–68 enclose the Sm domain; sequence DPFLNALRRERVPVSVYLVNGIKLQGTIESFDQFVVLLRNTVSQMVYKHAISTVVPARNV.

It belongs to the Hfq family. Homohexamer.

Functionally, RNA chaperone that binds small regulatory RNA (sRNAs) and mRNAs to facilitate mRNA translational regulation in response to envelope stress, environmental stress and changes in metabolite concentrations. Also binds with high specificity to tRNAs. The polypeptide is RNA-binding protein Hfq (Xylella fastidiosa (strain M12)).